The sequence spans 507 residues: Phosphoprotein (507 aa).

Polar residues predominate over residues 31–51 (EVSSLRDQTCNPGQENGTTGM). 3 disordered regions span residues 31–86 (EVSS…CGER), 123–172 (IEDA…GYSF), and 242–307 (GIVA…DSEY). Positions 147–160 (SLDDSTEDSGEDYS) are enriched in acidic residues. S151 bears the Phosphoserine mark. Composition is skewed to polar residues over residues 246-271 (GSTSGATQSALKSTGGSSEPSVSAGN) and 289-300 (SGTQLPPRTSNE). Positions 304–376 (DSEYDDELFS…LSSIMIAIPG (73 aa)) are multimerization. Positions 310–339 (ELFSEIQEIRSAITKLTEDNQAILTKLDTL) form a coiled coil. The interaction with the nucleocapsid (N-RNA) stretch occupies residues 459–507 (PSKAVLASLIRSSRVDQSHKHNMLALLKNIKGDDNLNEFYQMVKSITHA).

It belongs to the morbillivirus P protein family. In terms of assembly, homotetramer. Interacts (via multimerization domain) with polymerase L; this interaction forms the polymerase L-P complex. Interacts (via N-terminus) with N0 (via Ncore); this interaction allows P to chaperon N0 to avoid N polymerization before encapsidation. Interacts (via C-terminus) with N-RNA template; this interaction positions the polymerase on the template for both transcription and replication. Post-translationally, phosphorylation on serines by host CK2 is necessary for the formation of viral factories.

In terms of biological role, essential cofactor of the RNA polymerase L that plays a central role in the transcription and replication by forming the polymerase complex with RNA polymerase L and recruiting L to the genomic N-RNA template for RNA synthesis. Also plays a central role in the encapsidation of nascent RNA chains by forming the encapsidation complex with the nucleocapsid protein N (N-P complex). Acts as a chaperone for newly synthesized free N protein, so-called N0, allowing encapsidation of nascent RNA chains during replication. The nucleoprotein protein N prevents excessive phosphorylation of P, which leads to down-regulation of viral transcription/ replication. Participates, together with N, in the formation of viral factories (viroplasms), which are large inclusions in the host cytoplasm where replication takes place. This chain is Phosphoprotein (P/V), found in Canine distemper virus (strain Onderstepoort) (CDV).